The sequence spans 307 residues: Ribosomal protein L11 methyltransferase (307 aa).

The S-adenosyl-L-methionine site is built by threonine 162, glycine 183, aspartate 205, and asparagine 244.

It belongs to the methyltransferase superfamily. PrmA family.

Its subcellular location is the cytoplasm. It carries out the reaction L-lysyl-[protein] + 3 S-adenosyl-L-methionine = N(6),N(6),N(6)-trimethyl-L-lysyl-[protein] + 3 S-adenosyl-L-homocysteine + 3 H(+). Methylates ribosomal protein L11. This is Ribosomal protein L11 methyltransferase from Bordetella bronchiseptica (strain ATCC BAA-588 / NCTC 13252 / RB50) (Alcaligenes bronchisepticus).